A 1282-amino-acid chain; its full sequence is Cytokine receptor (1282 aa).

A signal peptide spans 1-23 (MVAQEQLVLLLMLLAGCRGGANA). The Extracellular segment spans residues 24-889 (ILDPGWVIPS…CTPDTHSVKA (866 aa)). N44, N86, N87, and N114 each carry an N-linked (GlcNAc...) asparagine glycan. A disulfide bridge links C47 with C106. Fibronectin type-III domains are found at residues 124-220 (PLLV…NHFE), 227-327 (PGQN…TAPA), 329-431 (PRRP…SNRD), 436-535 (EPRN…KKDD), 537-631 (AKME…TGEA), 635-735 (QPRE…TAIG), and 736-836 (VPSP…LMST). C132 and C142 are disulfide-bonded. N-linked (GlcNAc...) asparagine glycosylation is found at N143 and N156. C173 and C183 are oxidised to a cystine. 9 N-linked (GlcNAc...) asparagine glycosylation sites follow: N184, N230, N235, N278, N298, N310, N376, N448, and N466. C472 and C482 are oxidised to a cystine. N-linked (GlcNAc...) asparagine glycans are attached at residues N568, N581, N626, N676, N703, N777, N790, and N862. The helical transmembrane segment at 890 to 910 (MYQTIEVTVAILVLGVIFYLV) threads the bilayer. At 911 to 1282 (YKKYRKMSDI…NAMAHNRHVL (372 aa)) the chain is on the cytoplasmic side. Residue S976 is modified to Phosphoserine. 2 disordered regions span residues 989 to 1092 (TASS…HTFS) and 1238 to 1258 (TVGS…QHSR). Basic and acidic residues-rich tracts occupy residues 999–1009 (VDRDGYDDNHE) and 1033–1064 (NDRE…DREQ).

The protein belongs to the type I cytokine receptor family. In terms of assembly, interacts with wdp; the interaction promotes internalization of dome and its subsequent lysosomal degradation; thereby reducing JAK/STAT signaling. Undergoes lysosomal degradation. In stage 11 embryos, tracheal pits show highest expression, at stage 14 high expression is detected in the posterior spiracles, gut and head.

It localises to the apicolateral cell membrane. Functionally, critical for epithelial morphogenesis during oogenesis; border cell migration. Required in the germarium for the polarization of follicle cells during encapsulation of germline cells. Required for embryonic segmentation and trachea specification. Essential receptor molecule for upd and JAK/STAT signaling during oogenesis. The polypeptide is Cytokine receptor (dome) (Drosophila melanogaster (Fruit fly)).